A 434-amino-acid chain; its full sequence is Glutamate-1-semialdehyde 2,1-aminomutase (434 aa).

Lys273 is subject to N6-(pyridoxal phosphate)lysine.

The protein belongs to the class-III pyridoxal-phosphate-dependent aminotransferase family. HemL subfamily. Homodimer. The cofactor is pyridoxal 5'-phosphate.

It is found in the cytoplasm. The catalysed reaction is (S)-4-amino-5-oxopentanoate = 5-aminolevulinate. The protein operates within porphyrin-containing compound metabolism; protoporphyrin-IX biosynthesis; 5-aminolevulinate from L-glutamyl-tRNA(Glu): step 2/2. The polypeptide is Glutamate-1-semialdehyde 2,1-aminomutase (Polynucleobacter asymbioticus (strain DSM 18221 / CIP 109841 / QLW-P1DMWA-1) (Polynucleobacter necessarius subsp. asymbioticus)).